The chain runs to 514 residues: L-Threonine dehydratase biosynthetic IlvA (514 aa).

At K62 the chain carries N6-(pyridoxal phosphate)lysine. Residues N89, 188 to 192 (GGGGL), and S315 each bind pyridoxal 5'-phosphate. 2 consecutive ACT-like domains span residues 339-411 (ALLA…DLSD) and 434-504 (RLYS…DESN).

It belongs to the serine/threonine dehydratase family. In terms of assembly, homotetramer. Pyridoxal 5'-phosphate is required as a cofactor.

It catalyses the reaction L-threonine = 2-oxobutanoate + NH4(+). Its pathway is amino-acid biosynthesis; L-isoleucine biosynthesis; 2-oxobutanoate from L-threonine: step 1/1. Its activity is regulated as follows. Isoleucine allosterically inhibits whereas valine allosterically activates this enzyme. Its function is as follows. Catalyzes the anaerobic formation of alpha-ketobutyrate and ammonia from threonine in a two-step reaction. The first step involved a dehydration of threonine and a production of enamine intermediates (aminocrotonate), which tautomerizes to its imine form (iminobutyrate). Both intermediates are unstable and short-lived. The second step is the nonenzymatic hydrolysis of the enamine/imine intermediates to form 2-ketobutyrate and free ammonia. In the low water environment of the cell, the second step is accelerated by RidA. The chain is L-Threonine dehydratase biosynthetic IlvA (ilvA) from Salmonella typhimurium (strain LT2 / SGSC1412 / ATCC 700720).